The primary structure comprises 329 residues: UDP-glucose 4-epimerase (329 aa).

NAD(+)-binding positions include 13-14, 33-38, 53-54, 76-80, asparagine 95, threonine 120, tyrosine 144, lysine 148, and phenylalanine 172; these read YV, HNLSTG, DI, and FAAFS. Positions 120 and 144 each coordinate substrate. Tyrosine 144 (proton acceptor) is an active-site residue. Substrate contacts are provided by residues asparagine 173, 190 to 191, 207 to 209, arginine 221, and 281 to 284; these read HL, SVY, and RGRD.

Belongs to the NAD(P)-dependent epimerase/dehydratase family. As to quaternary structure, homodimer. It depends on NAD(+) as a cofactor.

The catalysed reaction is UDP-alpha-D-glucose = UDP-alpha-D-galactose. Its pathway is carbohydrate metabolism; galactose metabolism. Involved in the metabolism of galactose. Catalyzes the conversion of UDP-galactose (UDP-Gal) to UDP-glucose (UDP-Glc) through a mechanism involving the transient reduction of NAD. The polypeptide is UDP-glucose 4-epimerase (galE) (Streptomyces lividans).